A 419-amino-acid polypeptide reads, in one-letter code: N-acylneuraminate cytidylyltransferase (419 aa).

The protein belongs to the CMP-NeuNAc synthase family. As to quaternary structure, monomer. May form aggregates. Mg(2+) serves as cofactor. Mn(2+) is required as a cofactor.

It is found in the cytoplasm. It carries out the reaction an N-acylneuraminate + CTP = a CMP-N-acyl-beta-neuraminate + diphosphate. Inhibited by the CTP analogs 5-mercuri-CTP and CTP-2',3'-dialdehyde. Functionally, catalyzes the formation of CMP-N-acetylneuraminic acid (CMP-NeuNAc), which is essential for the formation of the capsule. This Escherichia coli O18:K1:H7 (strain RS218 / NMEC) protein is N-acylneuraminate cytidylyltransferase (neuA).